A 438-amino-acid chain; its full sequence is Ubiquitin carboxyl-terminal hydrolase 27 (438 aa).

Residues 78-421 (RGLINLGNTC…EGYLLFYHKQ (344 aa)) enclose the USP domain. The active-site Nucleophile is the Cys-87. Residue His-380 is the Proton acceptor of the active site.

Belongs to the peptidase C19 family. Interacts with phosphorylated BCL2L11 isoform BIMEL; this interaction leads to BCL2L11 deubiquitination and stabilization.

Its subcellular location is the cytoplasm. The protein localises to the cytosol. It localises to the nucleus. It carries out the reaction Thiol-dependent hydrolysis of ester, thioester, amide, peptide and isopeptide bonds formed by the C-terminal Gly of ubiquitin (a 76-residue protein attached to proteins as an intracellular targeting signal).. Deubiquitinase involved in innate antiviral immunity by mediating deubiquitination of CGAS and RIGI. Negatively regulates RIGI by mediating 'Lys-63'-linked deubiquitination of RIGI, inhibiting type I interferon signaling. Also regulates 'Lys-63'-linked ubiquitination level of MDA5/IFIH1. Acts as a positive regulator of the cGAS-STING pathway by catalyzing 'Lys-48'-linked deubiquitination of CGAS, thereby promoting its stabilization. Can reduce the levels of BCL2L11/BIM ubiquitination and stabilize BCL2L11 in response to the RAF-MAPK-degradation signal. By acting on BCL2L11 levels, may counteract the anti-apoptotic effects of MAPK activity. The polypeptide is Ubiquitin carboxyl-terminal hydrolase 27 (Mus musculus (Mouse)).